The sequence spans 429 residues: Glutamate-1-semialdehyde 2,1-aminomutase 1 (429 aa).

An N6-(pyridoxal phosphate)lysine modification is found at lysine 268.

The protein belongs to the class-III pyridoxal-phosphate-dependent aminotransferase family. HemL subfamily. As to quaternary structure, homodimer. It depends on pyridoxal 5'-phosphate as a cofactor.

The protein localises to the cytoplasm. The catalysed reaction is (S)-4-amino-5-oxopentanoate = 5-aminolevulinate. It participates in porphyrin-containing compound metabolism; protoporphyrin-IX biosynthesis; 5-aminolevulinate from L-glutamyl-tRNA(Glu): step 2/2. This Staphylococcus haemolyticus (strain JCSC1435) protein is Glutamate-1-semialdehyde 2,1-aminomutase 1.